The primary structure comprises 205 residues: Holliday junction branch migration complex subunit RuvA (205 aa).

The interval 1–64 (MIGRLRGIIL…EDAQLLFGFI (64 aa)) is domain I. The interval 65-143 (HKQERVLFRE…GLSGDLFVPQ (79 aa)) is domain II. Residues 144 to 156 (GAGEIPAAIDAPA) form a flexible linker region. Residues 157-205 (MPADPEGEAVAALVALGYKPQEASRMVSKVASAGSDCEMLIRDALRAAL) form a domain III region.

This sequence belongs to the RuvA family. Homotetramer. Forms an RuvA(8)-RuvB(12)-Holliday junction (HJ) complex. HJ DNA is sandwiched between 2 RuvA tetramers; dsDNA enters through RuvA and exits via RuvB. An RuvB hexamer assembles on each DNA strand where it exits the tetramer. Each RuvB hexamer is contacted by two RuvA subunits (via domain III) on 2 adjacent RuvB subunits; this complex drives branch migration. In the full resolvosome a probable DNA-RuvA(4)-RuvB(12)-RuvC(2) complex forms which resolves the HJ.

Its subcellular location is the cytoplasm. The RuvA-RuvB-RuvC complex processes Holliday junction (HJ) DNA during genetic recombination and DNA repair, while the RuvA-RuvB complex plays an important role in the rescue of blocked DNA replication forks via replication fork reversal (RFR). RuvA specifically binds to HJ cruciform DNA, conferring on it an open structure. The RuvB hexamer acts as an ATP-dependent pump, pulling dsDNA into and through the RuvAB complex. HJ branch migration allows RuvC to scan DNA until it finds its consensus sequence, where it cleaves and resolves the cruciform DNA. In Sodalis glossinidius (strain morsitans), this protein is Holliday junction branch migration complex subunit RuvA.